The chain runs to 190 residues: Protein hunchback (190 aa).

3 disordered regions span residues 13-59 (EPMS…SSNL), 86-110 (AAMT…PNPM), and 142-190 (QTND…KYMA). Positions 17–31 (HHHHHSHHHGHHHML) are enriched in basic residues. The segment covering 90–100 (PSPSNNDQNSP) has biased composition (polar residues). Residues 171 to 190 (EPEKDHDLISNSSEDMKYMA) are compositionally biased toward basic and acidic residues.

It belongs to the hunchback C2H2-type zinc-finger protein family.

It is found in the nucleus. Functionally, gap class segmentation protein that controls development of head structures. This Scaptomyza crassifemur (Fruit fly) protein is Protein hunchback (hb).